The chain runs to 277 residues: Putative pyruvate, phosphate dikinase regulatory protein (277 aa).

Residue 156 to 163 (GVSRTSKT) participates in ADP binding.

Belongs to the pyruvate, phosphate/water dikinase regulatory protein family. PDRP subfamily.

The enzyme catalyses N(tele)-phospho-L-histidyl/L-threonyl-[pyruvate, phosphate dikinase] + ADP = N(tele)-phospho-L-histidyl/O-phospho-L-threonyl-[pyruvate, phosphate dikinase] + AMP + H(+). It catalyses the reaction N(tele)-phospho-L-histidyl/O-phospho-L-threonyl-[pyruvate, phosphate dikinase] + phosphate + H(+) = N(tele)-phospho-L-histidyl/L-threonyl-[pyruvate, phosphate dikinase] + diphosphate. Its function is as follows. Bifunctional serine/threonine kinase and phosphorylase involved in the regulation of the pyruvate, phosphate dikinase (PPDK) by catalyzing its phosphorylation/dephosphorylation. This chain is Putative pyruvate, phosphate dikinase regulatory protein, found in Carboxydothermus hydrogenoformans (strain ATCC BAA-161 / DSM 6008 / Z-2901).